The sequence spans 174 residues: ATP-dependent protease subunit HslV (174 aa).

The active site involves Thr-2. 3 residues coordinate Na(+): Ala-157, Cys-160, and Thr-163.

The protein belongs to the peptidase T1B family. HslV subfamily. In terms of assembly, a double ring-shaped homohexamer of HslV is capped on each side by a ring-shaped HslU homohexamer. The assembly of the HslU/HslV complex is dependent on binding of ATP.

Its subcellular location is the cytoplasm. The enzyme catalyses ATP-dependent cleavage of peptide bonds with broad specificity.. Allosterically activated by HslU binding. Its function is as follows. Protease subunit of a proteasome-like degradation complex believed to be a general protein degrading machinery. In Shewanella baltica (strain OS195), this protein is ATP-dependent protease subunit HslV.